A 354-amino-acid polypeptide reads, in one-letter code: Dihydroorotate dehydrogenase (quinone) (354 aa).

Residues 67–71 (AGFDK) and threonine 91 each bind FMN. Lysine 71 contributes to the substrate binding site. 116–120 (NRMGF) contacts substrate. 2 residues coordinate FMN: asparagine 144 and asparagine 177. Residue asparagine 177 coordinates substrate. Serine 180 functions as the Nucleophile in the catalytic mechanism. Substrate is bound at residue asparagine 182. FMN-binding residues include lysine 213 and threonine 241. A substrate-binding site is contributed by 242–243 (NT). Residues glycine 265, glycine 294, and 315-316 (YT) each bind FMN.

The protein belongs to the dihydroorotate dehydrogenase family. Type 2 subfamily. In terms of assembly, monomer. The cofactor is FMN.

It is found in the cell membrane. It catalyses the reaction (S)-dihydroorotate + a quinone = orotate + a quinol. The protein operates within pyrimidine metabolism; UMP biosynthesis via de novo pathway; orotate from (S)-dihydroorotate (quinone route): step 1/1. Catalyzes the conversion of dihydroorotate to orotate with quinone as electron acceptor. The chain is Dihydroorotate dehydrogenase (quinone) from Mycolicibacterium smegmatis (strain ATCC 700084 / mc(2)155) (Mycobacterium smegmatis).